The chain runs to 75 residues: Small ribosomal subunit protein eS31 (75 aa).

Residues cysteine 41, cysteine 44, cysteine 60, and cysteine 63 each contribute to the Zn(2+) site. The segment at 41–63 adopts a C4-type zinc-finger fold; that stretch reads CPRCGSIMAHHLKPNERWSCGKC.

This sequence belongs to the eukaryotic ribosomal protein eS31 family. In terms of assembly, part of the 30S ribosomal subunit. It depends on Zn(2+) as a cofactor.

The sequence is that of Small ribosomal subunit protein eS31 from Saccharolobus solfataricus (strain ATCC 35092 / DSM 1617 / JCM 11322 / P2) (Sulfolobus solfataricus).